Reading from the N-terminus, the 416-residue chain is Tiggy-winkle hedgehog protein (416 aa).

An N-terminal signal peptide occupies residues 1–26 (MDVRLHLKQFALLCFISLLLTPCGLA). Residue Cys-27 is the site of N-palmitoyl cysteine attachment. The Ca(2+) site is built by Glu-92, Glu-93, Asp-98, Thr-128, Glu-129, Asp-132, and Asp-134. Residues His-143, Asp-150, and His-185 each coordinate Zn(2+). Gly-200 carries the Cholesterol glycine ester lipid modification.

The protein belongs to the hedgehog family. Multimer. In terms of assembly, interacts with HHATL/GUP1 which negatively regulates HHAT-mediated palmitoylation of the TWHH N-terminus. Interacts with BOC and CDON. Interacts with HHIP. Interacts with DISP1 via its cholesterol anchor. Interacts with SCUBE2. Post-translationally, the C-terminal domain displays an autoproteolysis activity and a cholesterol transferase activity. Both activities result in the cleavage of the full-length protein into two parts (N-product and C-product) followed by the covalent attachment of a cholesterol moiety to the C-terminal of the newly generated N-product. Cholesterylation is required for the tiggy-winkle hedgehog protein N-product targeting to lipid rafts and multimerization. N-product is the active species in both local and long-range signaling, whereas the C-product is degraded in the endoplasmic reticulum. In terms of processing, N-palmitoylation by HHAT of N-product is required for tiggy-winkle hedgehog protein N-product multimerization and full activity. It is a prerequisite for the membrane-proximal positioning and the subsequent shedding of this N-terminal peptide. The lipidated N- and C-terminal peptides of N-product can be cleaved (shedding). The N-terminal palmitoylated peptide is cleaved at the Cardin-Weintraub (CW) motif site. The cleavage reduced the interactions with heparan sulfate. The cleavage is enhanced by SCUBE2. Expressed in the ventral midline of the neural tube and brain. In the developing brain, expression occurs in domains that include a discrete region in the floor of the diencephalon. Not detected in the notochord or developing fin bud.

Its subcellular location is the cell membrane. The protein resides in the endoplasmic reticulum membrane. The protein localises to the golgi apparatus membrane. Its function is as follows. The C-terminal part of the tiggy-winkle hedgehog protein precursor displays an autoproteolysis and a cholesterol transferase activity. Both activities result in the cleavage of the full-length protein into two parts (N-product and C-product) followed by the covalent attachment of a cholesterol moiety to the C-terminal of the newly generated N-product. Both activities occur in the endoplasmic reticulum. Once cleaved, the C-product is degraded in the endoplasmic reticulum. The dually lipidated tiggy-winkle hedgehog protein N-product is a morphogen which is essential for a variety of patterning events during development. Involved in dorso-ventral patterning of the brain and in early patterning of the developing eyes. Binds to the patched (PTCH1) receptor, which functions in association with smoothened (SMO), to activate the transcription of target genes. This chain is Tiggy-winkle hedgehog protein (shhb), found in Danio rerio (Zebrafish).